A 478-amino-acid polypeptide reads, in one-letter code: F-box protein YDR306C (478 aa).

Over residues 1 to 14 (MANKSRPKKIKAPY) the composition is skewed to basic residues. Disordered regions lie at residues 1-32 (MANKSRPKKIKAPYRKYVAGEGFSSTRNDNKA) and 67-101 (RLSNEKKDKKGRKQSPSSSSTSSSKGEKNGKVIES). A compositionally biased stretch (low complexity) spans 80 to 90 (QSPSSSSTSSS). A compositionally biased stretch (basic and acidic residues) spans 91 to 101 (KGEKNGKVIES). Positions 112–173 (KMVLPWEIQH…CLPKLYYAPA (62 aa)) constitute an F-box domain.

Interacts with SKP1. Component of the probable SCF(YDR306C) complex containing CDC53, SKP1, RBX1 and YDR306C. In terms of processing, autoubiquitinated by the E3 ubiquitin ligase complex in conjunction with the E2 enzyme CDC34.

It participates in protein modification; protein ubiquitination. Substrate recognition component of a SCF (SKP1-CUL1-F-box protein) E3 ubiquitin-protein ligase complex which mediates the ubiquitination and subsequent proteasomal degradation of target proteins. Probably recognizes and binds to phosphorylated target proteins. The protein is F-box protein YDR306C of Saccharomyces cerevisiae (strain ATCC 204508 / S288c) (Baker's yeast).